A 122-amino-acid polypeptide reads, in one-letter code: Large ribosomal subunit protein uL14 (122 aa).

The protein belongs to the universal ribosomal protein uL14 family. In terms of assembly, part of the 50S ribosomal subunit. Forms a cluster with proteins L3 and L19. In the 70S ribosome, L14 and L19 interact and together make contacts with the 16S rRNA in bridges B5 and B8.

Binds to 23S rRNA. Forms part of two intersubunit bridges in the 70S ribosome. The chain is Large ribosomal subunit protein uL14 from Campylobacter fetus subsp. fetus (strain 82-40).